Reading from the N-terminus, the 298-residue chain is ATP synthase F(1) complex subunit gamma, mitochondrial (298 aa).

The transit peptide at 1–25 (MFSRAGVAGLSAWTVQPQWIQVRNM) directs the protein to the mitochondrion. An N6-acetyllysine modification is found at K39. The residue at position 49 (K49) is an N6-succinyllysine. K55 is subject to N6-acetyllysine. Position 115 is an N6-acetyllysine; alternate (K115). K115 is subject to N6-succinyllysine; alternate. S146 carries the post-translational modification Phosphoserine. K154 carries the post-translational modification N6-acetyllysine; alternate. An N6-succinyllysine; alternate modification is found at K154. Residue K197 is modified to N6-acetyllysine. K270 is subject to N6-succinyllysine.

Belongs to the ATPase gamma chain family. In terms of assembly, component of the ATP synthase complex composed at least of ATP5F1A/subunit alpha, ATP5F1B/subunit beta, ATP5MC1/subunit c (homooctomer), MT-ATP6/subunit a, MT-ATP8/subunit 8, ATP5ME/subunit e, ATP5MF/subunit f, ATP5MG/subunit g, ATP5MK/subunit k, ATP5MJ/subunit j, ATP5F1C/subunit gamma, ATP5F1D/subunit delta, ATP5F1E/subunit epsilon, ATP5PF/subunit F6, ATP5PB/subunit b, ATP5PD/subunit d, ATP5PO/subunit OSCP. ATP synthase complex consists of a soluble F(1) head domain (subunits alpha(3) and beta(3)) - the catalytic core - and a membrane F(0) domain - the membrane proton channel (subunits c, a, 8, e, f, g, k and j). These two domains are linked by a central stalk (subunits gamma, delta, and epsilon) rotating inside the F1 region and a stationary peripheral stalk (subunits F6, b, d, and OSCP). Interacts with FLVCR2; this interaction occurs in the absence of heme and is disrupted upon heme binding.

It localises to the mitochondrion inner membrane. Subunit gamma, of the mitochondrial membrane ATP synthase complex (F(1)F(0) ATP synthase or Complex V) that produces ATP from ADP in the presence of a proton gradient across the membrane which is generated by electron transport complexes of the respiratory chain. ATP synthase complex consist of a soluble F(1) head domain - the catalytic core - and a membrane F(1) domain - the membrane proton channel. These two domains are linked by a central stalk rotating inside the F(1) region and a stationary peripheral stalk. During catalysis, ATP synthesis in the catalytic domain of F(1) is coupled via a rotary mechanism of the central stalk subunits to proton translocation. In vivo, can only synthesize ATP although its ATP hydrolase activity can be activated artificially in vitro. With the central stalk subunit delta, is essential for the biogenesis of F(1) catalytic part of the ATP synthase complex namely in the formation of F1 assembly intermediate. This is ATP synthase F(1) complex subunit gamma, mitochondrial from Bos taurus (Bovine).